A 175-amino-acid polypeptide reads, in one-letter code: NADH-ubiquinone oxidoreductase chain 6 (175 aa).

Transmembrane regions (helical) follow at residues 1–21, 25–45, 47–67, 88–108, and 149–169; these read MMMY…VGVS, SPIY…GVIL, FGGS…MLVV, VVLG…IYAL, and YGVW…VIIM.

This sequence belongs to the complex I subunit 6 family. As to quaternary structure, core subunit of respiratory chain NADH dehydrogenase (Complex I) which is composed of 45 different subunits.

Its subcellular location is the mitochondrion inner membrane. It catalyses the reaction a ubiquinone + NADH + 5 H(+)(in) = a ubiquinol + NAD(+) + 4 H(+)(out). Functionally, core subunit of the mitochondrial membrane respiratory chain NADH dehydrogenase (Complex I) which catalyzes electron transfer from NADH through the respiratory chain, using ubiquinone as an electron acceptor. Essential for the catalytic activity and assembly of complex I. The protein is NADH-ubiquinone oxidoreductase chain 6 (MT-ND6) of Balaenoptera physalus (Fin whale).